The chain runs to 57 residues: UPF0391 membrane protein RHECIAT_CH0003936 (57 aa).

A run of 2 helical transmembrane segments spans residues 4–24 (WALI…SGVS) and 33–53 (VLFG…LMAG).

The protein belongs to the UPF0391 family.

Its subcellular location is the cell membrane. In Rhizobium etli (strain CIAT 652), this protein is UPF0391 membrane protein RHECIAT_CH0003936.